A 356-amino-acid chain; its full sequence is Protein RecA (356 aa).

68–75 (GQESSGKT) serves as a coordination point for ATP.

This sequence belongs to the RecA family.

It is found in the cytoplasm. Its function is as follows. Can catalyze the hydrolysis of ATP in the presence of single-stranded DNA, the ATP-dependent uptake of single-stranded DNA by duplex DNA, and the ATP-dependent hybridization of homologous single-stranded DNAs. It interacts with LexA causing its activation and leading to its autocatalytic cleavage. The protein is Protein RecA of Thermotoga petrophila (strain ATCC BAA-488 / DSM 13995 / JCM 10881 / RKU-1).